A 308-amino-acid polypeptide reads, in one-letter code: Homoserine kinase (308 aa).

95-105 (PQSRGLGSSAA) provides a ligand contact to ATP.

This sequence belongs to the GHMP kinase family. Homoserine kinase subfamily.

The protein localises to the cytoplasm. The catalysed reaction is L-homoserine + ATP = O-phospho-L-homoserine + ADP + H(+). It participates in amino-acid biosynthesis; L-threonine biosynthesis; L-threonine from L-aspartate: step 4/5. Catalyzes the ATP-dependent phosphorylation of L-homoserine to L-homoserine phosphate. This is Homoserine kinase from Corynebacterium jeikeium (strain K411).